A 588-amino-acid chain; its full sequence is Tetratricopeptide repeat protein 39B (588 aa).

TPR repeat units lie at residues 294–327 (SIIL…QQEW), 485–518 (CLVQ…EKRV), and 526–559 (PFTF…YKDY).

It belongs to the TTC39 family.

Functionally, may be involved in lipid metabolism. The protein is Tetratricopeptide repeat protein 39B (ttc39b) of Xenopus tropicalis (Western clawed frog).